A 353-amino-acid polypeptide reads, in one-letter code: tRNA-specific 2-thiouridylase MnmA 2 (353 aa).

Residues 9–16 (AMSGGVDS) and M35 contribute to the ATP site. C98 acts as the Nucleophile in catalysis. C98 and C194 are joined by a disulfide. G122 is an ATP binding site. The interval 144–146 (KDQ) is interaction with tRNA. The active-site Cysteine persulfide intermediate is C194. Residues 300-301 (RY) are interaction with tRNA.

This sequence belongs to the MnmA/TRMU family.

It localises to the cytoplasm. It catalyses the reaction S-sulfanyl-L-cysteinyl-[protein] + uridine(34) in tRNA + AH2 + ATP = 2-thiouridine(34) in tRNA + L-cysteinyl-[protein] + A + AMP + diphosphate + H(+). In terms of biological role, catalyzes the 2-thiolation of uridine at the wobble position (U34) of tRNA, leading to the formation of s(2)U34. The protein is tRNA-specific 2-thiouridylase MnmA 2 of Clostridium botulinum (strain ATCC 19397 / Type A).